The following is a 72-amino-acid chain: UPF0270 protein KPK_0377 (72 aa).

Belongs to the UPF0270 family.

This is UPF0270 protein KPK_0377 from Klebsiella pneumoniae (strain 342).